A 342-amino-acid polypeptide reads, in one-letter code: Phenylalanine--tRNA ligase alpha subunit (342 aa).

E257 is a Mg(2+) binding site.

Belongs to the class-II aminoacyl-tRNA synthetase family. Phe-tRNA synthetase alpha subunit type 1 subfamily. In terms of assembly, tetramer of two alpha and two beta subunits. Mg(2+) serves as cofactor.

Its subcellular location is the cytoplasm. The enzyme catalyses tRNA(Phe) + L-phenylalanine + ATP = L-phenylalanyl-tRNA(Phe) + AMP + diphosphate + H(+). The protein is Phenylalanine--tRNA ligase alpha subunit (pheS) of Chlamydia trachomatis serovar D (strain ATCC VR-885 / DSM 19411 / UW-3/Cx).